The chain runs to 168 residues: Phosphopantetheine adenylyltransferase (168 aa).

Residue T10 participates in substrate binding. ATP is bound by residues 10–11 (TF) and H18. 3 residues coordinate substrate: K42, L74, and R88. ATP is bound by residues 89 to 91 (GLR), E99, and 124 to 130 (NSFISST).

It belongs to the bacterial CoaD family. As to quaternary structure, homohexamer. The cofactor is Mg(2+).

It is found in the cytoplasm. The enzyme catalyses (R)-4'-phosphopantetheine + ATP + H(+) = 3'-dephospho-CoA + diphosphate. The protein operates within cofactor biosynthesis; coenzyme A biosynthesis; CoA from (R)-pantothenate: step 4/5. In terms of biological role, reversibly transfers an adenylyl group from ATP to 4'-phosphopantetheine, yielding dephospho-CoA (dPCoA) and pyrophosphate. The protein is Phosphopantetheine adenylyltransferase of Shewanella frigidimarina (strain NCIMB 400).